The following is a 136-amino-acid chain: Transcription antitermination protein NusB (136 aa).

Belongs to the NusB family.

In terms of biological role, involved in transcription antitermination. Required for transcription of ribosomal RNA (rRNA) genes. Binds specifically to the boxA antiterminator sequence of the ribosomal RNA (rrn) operons. This chain is Transcription antitermination protein NusB, found in Treponema denticola (strain ATCC 35405 / DSM 14222 / CIP 103919 / JCM 8153 / KCTC 15104).